The primary structure comprises 338 residues: 1-aminocyclopropane-1-carboxylate deaminase (338 aa).

N6-(pyridoxal phosphate)lysine is present on K51. S78 functions as the Nucleophile in the catalytic mechanism.

This sequence belongs to the ACC deaminase/D-cysteine desulfhydrase family. As to quaternary structure, homotrimer. Pyridoxal 5'-phosphate serves as cofactor.

The catalysed reaction is 1-aminocyclopropane-1-carboxylate + H2O = 2-oxobutanoate + NH4(+). In terms of biological role, catalyzes a cyclopropane ring-opening reaction, the irreversible conversion of 1-aminocyclopropane-1-carboxylate (ACC) to ammonia and alpha-ketobutyrate. Allows growth on ACC as a nitrogen source. The sequence is that of 1-aminocyclopropane-1-carboxylate deaminase from Burkholderia vietnamiensis (strain G4 / LMG 22486) (Burkholderia cepacia (strain R1808)).